The following is a 388-amino-acid chain: 3beta-hydroxysteroid dehydrogenase dhs-16 (388 aa).

The helical transmembrane segment at 2-22 (LELIYILPLLCFVYFLFRRFV) threads the bilayer. The active-site Proton acceptor is the tyrosine 188. The next 2 helical transmembrane spans lie at 300–320 (AIFM…WILA) and 346–366 (IQWI…TIFF).

It belongs to the short-chain dehydrogenases/reductases (SDR) family. In terms of tissue distribution, strongly expressed in the hypodermis and posterior pharyngeal bulb and in a number of unidentified neurons of the head and tail.

It is found in the membrane. The enzyme catalyses lathosterol + NAD(+) = 5alpha-cholest-7-en-3-one + NADH + H(+). It participates in steroid hormone biosynthesis; dafachronic acid biosynthesis. In terms of biological role, 3beta-hydroxysteroid dehydrogenase that converts 3beta-hydroxysteroids to 3-ketosteroids, an essential step in the production of dafachronic acids from cholesterol. Catalyzes the dehydrogenation of lathosterol (5alpha-cholest-7-en-3beta-ol) to lathosterone (5alpha-cholest-7-en-3-one), a step required for maximal biosynthesis of Delta(7)-dafachronic acid. Dafachronic acids act as ligands and bind directly to the nuclear hormone receptor (NHR) daf-12, suppressing dauer formation and inducing reproductive growth, they can also regulate C.elegans lifespan. This chain is 3beta-hydroxysteroid dehydrogenase dhs-16 (dhs-16), found in Caenorhabditis elegans.